The primary structure comprises 81 residues: Sulfur carrier protein TusA (81 aa).

The active-site Cysteine persulfide intermediate is the cysteine 19.

The protein belongs to the sulfur carrier protein TusA family. As to quaternary structure, interacts with IscS.

The protein localises to the cytoplasm. It participates in tRNA modification. In terms of biological role, sulfur carrier protein involved in sulfur trafficking in the cell. Part of a sulfur-relay system required for 2-thiolation during synthesis of 2-thiouridine of the modified wobble base 5-methylaminomethyl-2-thiouridine (mnm(5)s(2)U) in tRNA. Interacts with IscS and stimulates its cysteine desulfurase activity. Accepts an activated sulfur from IscS, which is then transferred to TusD, and thus determines the direction of sulfur flow from IscS to 2-thiouridine formation. Also appears to be involved in sulfur transfer for the biosynthesis of molybdopterin. The chain is Sulfur carrier protein TusA from Enterobacter sp. (strain 638).